A 438-amino-acid chain; its full sequence is METVSLSLWNAPRAEAPVVATVALPGSKSITNRALILAALADGPSTLTGALRSRDTDLMIEALRTLGISIETVGADTTLRVTPGPLQGGAVDCGLAGTVMRFLPPVAALASGTVHFDGDEQARTRPLDTILDALRGLGADIDGASLPFTVRGAGSLRGGRVTIDASGSSQFVSGLLLSAAAFDEGVTVHHDGKTVPSMPHIDMTVEMLRESGVEVTTPATGGEADTWRVSPGVVRAVDRAIEPDLSNATAFLAAAAVTGGEVTVPLWPSRTTQPGDAIREILLAMGADVRLDGANLTVRGPQQLTGIDIDLHDVGELTPTVAALAALADGPSHLRGIAHLRGHETDRLAALAHEINSLGGNVTETEDGLTIVPAGLHGGTWRSYADHRMATAGAIVGLRVDGIRIEDVGTTAKTLPGFENLWATMLSAAAGTERKASF.

Positions 28, 29, and 33 each coordinate 3-phosphoshikimate. A phosphoenolpyruvate-binding site is contributed by Lys28. Residues Gly97 and Arg125 each contribute to the phosphoenolpyruvate site. Ser168, Ser169, Gln170, Glu316, and His343 together coordinate 3-phosphoshikimate. Residue Gln170 coordinates phosphoenolpyruvate. Glu316 (proton acceptor) is an active-site residue. Residues Arg347, Arg388, and Lys413 each coordinate phosphoenolpyruvate.

Belongs to the EPSP synthase family. As to quaternary structure, monomer.

The protein resides in the cytoplasm. It catalyses the reaction 3-phosphoshikimate + phosphoenolpyruvate = 5-O-(1-carboxyvinyl)-3-phosphoshikimate + phosphate. It functions in the pathway metabolic intermediate biosynthesis; chorismate biosynthesis; chorismate from D-erythrose 4-phosphate and phosphoenolpyruvate: step 6/7. Its function is as follows. Catalyzes the transfer of the enolpyruvyl moiety of phosphoenolpyruvate (PEP) to the 5-hydroxyl of shikimate-3-phosphate (S3P) to produce enolpyruvyl shikimate-3-phosphate and inorganic phosphate. The protein is 3-phosphoshikimate 1-carboxyvinyltransferase of Rhodococcus jostii (strain RHA1).